We begin with the raw amino-acid sequence, 327 residues long: Protoheme IX farnesyltransferase (327 aa).

The next 8 membrane-spanning stretches (helical) occupy residues 35–55, 60–80, 106–126, 129–149, 157–177, 185–205, 234–254, and 283–303; these read LIPLLLATTLGGMALSEGWPL, LVCTLGGGALASAAAGVLNCL, SAFIGAIACTLAAAMLLVSGV, LAAGLSLLGLCSYVLLYTALL, IVIGGVAGAIPPLVGAAAATG, WLFALVMVWTPAHFWALALLL, GWITVLLSSLGVFALPSGGAF, and AKALFRWSILYLFGVCLLLIL.

The protein belongs to the UbiA prenyltransferase family. Protoheme IX farnesyltransferase subfamily.

Its subcellular location is the cell inner membrane. The enzyme catalyses heme b + (2E,6E)-farnesyl diphosphate + H2O = Fe(II)-heme o + diphosphate. It participates in porphyrin-containing compound metabolism; heme O biosynthesis; heme O from protoheme: step 1/1. Functionally, converts heme B (protoheme IX) to heme O by substitution of the vinyl group on carbon 2 of heme B porphyrin ring with a hydroxyethyl farnesyl side group. This is Protoheme IX farnesyltransferase from Synechococcus sp. (strain CC9605).